Reading from the N-terminus, the 139-residue chain is Nucleoside diphosphate kinase (139 aa).

Residues K10, F58, R86, T92, R104, and N114 each coordinate ATP. The active-site Pros-phosphohistidine intermediate is the H117.

It belongs to the NDK family. As to quaternary structure, homotetramer. The cofactor is Mg(2+).

It is found in the cytoplasm. The enzyme catalyses a 2'-deoxyribonucleoside 5'-diphosphate + ATP = a 2'-deoxyribonucleoside 5'-triphosphate + ADP. The catalysed reaction is a ribonucleoside 5'-diphosphate + ATP = a ribonucleoside 5'-triphosphate + ADP. In terms of biological role, major role in the synthesis of nucleoside triphosphates other than ATP. The ATP gamma phosphate is transferred to the NDP beta phosphate via a ping-pong mechanism, using a phosphorylated active-site intermediate. The chain is Nucleoside diphosphate kinase from Mycolicibacterium smegmatis (strain ATCC 700084 / mc(2)155) (Mycobacterium smegmatis).